The primary structure comprises 198 residues: Glycerol-3-phosphate acyltransferase (198 aa).

5 helical membrane-spanning segments follow: residues 10 to 30 (LIPI…WILV), 57 to 77 (GISF…ILIL), 86 to 106 (IMYL…WFLF), 118 to 138 (VVLS…AVVF), and 160 to 180 (AVTE…IVLI).

Belongs to the PlsY family. Probably interacts with PlsX.

The protein localises to the cell inner membrane. It carries out the reaction an acyl phosphate + sn-glycerol 3-phosphate = a 1-acyl-sn-glycero-3-phosphate + phosphate. It functions in the pathway lipid metabolism; phospholipid metabolism. Its function is as follows. Catalyzes the transfer of an acyl group from acyl-phosphate (acyl-PO(4)) to glycerol-3-phosphate (G3P) to form lysophosphatidic acid (LPA). This enzyme utilizes acyl-phosphate as fatty acyl donor, but not acyl-CoA or acyl-ACP. In Anaplasma marginale (strain Florida), this protein is Glycerol-3-phosphate acyltransferase.